The chain runs to 280 residues: Extracellular metalloprotease GLRG_06286 (280 aa).

Positions 1-17 (MQVTFTLVAALAGMASA) are cleaved as a signal peptide. Residue Asn51 is glycosylated (N-linked (GlcNAc...) asparagine). His196 is a binding site for Zn(2+). The active site involves Glu197. His200 is a Zn(2+) binding site. Residues 217-236 (DSIADTPAQSSPSSGCPVGR) form a disordered region. A disulfide bridge links Cys232 with Cys259.

This sequence belongs to the peptidase M43B family.

Its subcellular location is the secreted. Its function is as follows. Secreted metalloproteinase that allows assimilation of proteinaceous substrates. The chain is Extracellular metalloprotease GLRG_06286 from Colletotrichum graminicola (strain M1.001 / M2 / FGSC 10212) (Maize anthracnose fungus).